The chain runs to 66 residues: Large ribosomal subunit protein uL29 (66 aa).

The protein belongs to the universal ribosomal protein uL29 family.

This chain is Large ribosomal subunit protein uL29, found in Thermoplasma volcanium (strain ATCC 51530 / DSM 4299 / JCM 9571 / NBRC 15438 / GSS1).